We begin with the raw amino-acid sequence, 298 residues long: MYHVPVLLKESVEGLNINPEGIYVDVTFGGGGHSREILKHLKGGKLYAFDQDADAVDNAKDLIGPNFTLIPANFRYIKKYLRLNGVDKVDGLLGDLGISSHQIDTPERGFSIRYDAPLDMRMDRAIDKTAADIINKYSEHGLHSILGMYGEVRNAKTLAQALVKERINKPINRTSELIEVLSDYAPRGKESKYYAQVFQALRIEVNEELEALKDLLEQSQQVLKSGGRLSIISYHSLEDRLVKNFVQQGKFHGDAEKDLYGNTNKPFKSVGKAIDPDDEEKERNNRARSARLRIAERE.

S-adenosyl-L-methionine-binding positions include 31-33, aspartate 50, tyrosine 80, aspartate 95, and glutamine 102; that span reads GGH. Residues 255 to 298 form a disordered region; the sequence is AEKDLYGNTNKPFKSVGKAIDPDDEEKERNNRARSARLRIAERE.

This sequence belongs to the methyltransferase superfamily. RsmH family.

Its subcellular location is the cytoplasm. The catalysed reaction is cytidine(1402) in 16S rRNA + S-adenosyl-L-methionine = N(4)-methylcytidine(1402) in 16S rRNA + S-adenosyl-L-homocysteine + H(+). In terms of biological role, specifically methylates the N4 position of cytidine in position 1402 (C1402) of 16S rRNA. This is Ribosomal RNA small subunit methyltransferase H from Cytophaga hutchinsonii (strain ATCC 33406 / DSM 1761 / CIP 103989 / NBRC 15051 / NCIMB 9469 / D465).